A 203-amino-acid chain; its full sequence is Ribosome maturation factor RimP (203 aa).

Residues 183–203 (FDDIETEGSAEGTTGSEEENK) form a disordered region.

The protein belongs to the RimP family.

It localises to the cytoplasm. In terms of biological role, required for maturation of 30S ribosomal subunits. In Ruegeria sp. (strain TM1040) (Silicibacter sp.), this protein is Ribosome maturation factor RimP.